A 265-amino-acid polypeptide reads, in one-letter code: Neutrophil elastase (265 aa).

A signal peptide spans 1 to 26 (MALGRLSSRTLAAMLLALFLGGPALA). One can recognise a Peptidase S1 domain in the interval 29–247 (IVGGRPARPH…FADWINSIIR (219 aa)). An intrachain disulfide couples Cys54 to Cys70. Catalysis depends on charge relay system residues His69 and Asp116. N-linked (GlcNAc...) asparagine glycosylation is found at Asn123 and Asn172. 3 disulfides stabilise this stretch: Cys150–Cys208, Cys180–Cys187, and Cys198–Cys223. Catalysis depends on Ser202, which acts as the Charge relay system.

It belongs to the peptidase S1 family. Elastase subfamily. Interacts with NOTCH2NL.

The enzyme catalyses Hydrolysis of proteins, including elastin. Preferential cleavage: Val-|-Xaa &gt; Ala-|-Xaa.. In terms of biological role, serine protease that modifies the functions of natural killer cells, monocytes and granulocytes. Inhibits C5a-dependent neutrophil enzyme release and chemotaxis. Promotes blood coagulation. Through the activation of the platelet fibrinogen receptor integrin alpha-IIb/beta-3, potentiates platelet aggregation induced by a threshold concentration of cathepsin G (CTSG). Cleaves and thus inactivates tissue factor pathway inhibitor (TFPI). Capable of killing E.coli; probably digests outer membrane protein A (ompA) in E.coli. The chain is Neutrophil elastase (Elane) from Mus musculus (Mouse).